Here is a 433-residue protein sequence, read N- to C-terminus: Signal recognition particle 54 kDa protein (433 aa).

Residues 106-113 (GVEGSGKT), 186-190 (DTAGR), and 244-247 (TKMD) contribute to the GTP site.

It belongs to the GTP-binding SRP family. SRP54 subfamily. As to quaternary structure, part of the signal recognition particle protein translocation system, which is composed of SRP and FtsY. Archaeal SRP consists of a 7S RNA molecule of 300 nucleotides and two protein subunits: SRP54 and SRP19.

The protein localises to the cytoplasm. The catalysed reaction is GTP + H2O = GDP + phosphate + H(+). Its function is as follows. Involved in targeting and insertion of nascent membrane proteins into the cytoplasmic membrane. Binds to the hydrophobic signal sequence of the ribosome-nascent chain (RNC) as it emerges from the ribosomes. The SRP-RNC complex is then targeted to the cytoplasmic membrane where it interacts with the SRP receptor FtsY. The sequence is that of Signal recognition particle 54 kDa protein from Pyrobaculum aerophilum (strain ATCC 51768 / DSM 7523 / JCM 9630 / CIP 104966 / NBRC 100827 / IM2).